The chain runs to 491 residues: Cytochrome P450 monooxygenase olcB (491 aa).

A helical transmembrane segment spans residues 5 to 27 (LLLSLSVCLLYVFITAFWNLYIH). Residue Cys435 participates in heme binding.

The protein belongs to the cytochrome P450 family. The cofactor is heme.

The protein localises to the membrane. It functions in the pathway secondary metabolite biosynthesis; terpenoid biosynthesis. Cytochrome P450 monooxygenase; part of the gene cluster that mediates the biosynthesis of 15-deoxyoxalicine B. The first step of the pathway is the synthesis of nicotinyl-CoA from nicotinic acid by the nicotinic acid-CoA ligase olcI. Nicotinyl-CoA is then a substrate of polyketide synthase olcA to produce 4-hydroxy-6-(3-pyridinyl)-2H-pyran-2-one (HPPO) which is further prenylated by the polyprenyl transferase olcH to yield geranylgeranyl-HPPO. Geranylgeranyl pyrophosphate is provided by the cluster-specific geranylgeranyl pyrophosphate synthase olcC. The FAD-dependent monooxygenase olcE catalyzes the epoxidation of geranylgeranyl-HPPO and the terpene cyclase olcD catalyzes the cyclization of the terpenoid component, resulting in the formation of the tricyclic terpene moiety seen in predecaturin E. The cytochrome P450 monooxygenase then catalyzes the allylic oxidation of predecaturin E, which is followed by spirocylization with concomitant loss of one molecule of water to form decaturin E. Decaturin E is the substrate of the cytochrome P450 monooxygenase olcJ which hydroxylates it at the C-29 position to form decaturin F. The short-chain dehydrogenase/reductase olcF may catalyze the oxidation of decaturin F to generate the 29-hydroxyl-27-one intermediate, and subsequent hemiacetal formation probably leads to the formation of decaturin C. The dioxygenase olcK may be a peroxisomal enzyme that catalyzes the hydroxylation of decaturin C into decaturin A once decaturin C is shuttled into the peroxisome by the MFS transporter olcL. Finally the cytochrome P450 monooxygenase olcB catalyzes the oxidative rearrangement to yield 15-deoxyoxalicine B. In the absence of olcJ, decaturin E may be shunted to a pathway in which it is oxidized to a ketone, possibly by olcF, to form decaturin D, which undergoes further allylic oxidation to yield decaturin G. Moreover, in the absence of oclK or oclL, oclB can convert decaturin C into 15-deoxyoxalicine A. The chain is Cytochrome P450 monooxygenase olcB from Penicillium canescens.